We begin with the raw amino-acid sequence, 458 residues long: Ribosomal protein uS12 methylthiotransferase RimO (458 aa).

Positions 26 to 136 (PRIGMVSLGC…VLDAVHGAVP (111 aa)) constitute an MTTase N-terminal domain. Cysteine 35, cysteine 71, cysteine 100, cysteine 167, cysteine 171, and cysteine 174 together coordinate [4Fe-4S] cluster. Residues 153-389 (LTPRHYAYLK…MEKAQAISEA (237 aa)) form the Radical SAM core domain. Residues 392 to 458 (QAKVGRTMQV…SEYDLWGKLT (67 aa)) form the TRAM domain.

It belongs to the methylthiotransferase family. RimO subfamily. Requires [4Fe-4S] cluster as cofactor.

The protein localises to the cytoplasm. The catalysed reaction is L-aspartate(89)-[ribosomal protein uS12]-hydrogen + (sulfur carrier)-SH + AH2 + 2 S-adenosyl-L-methionine = 3-methylsulfanyl-L-aspartate(89)-[ribosomal protein uS12]-hydrogen + (sulfur carrier)-H + 5'-deoxyadenosine + L-methionine + A + S-adenosyl-L-homocysteine + 2 H(+). Catalyzes the methylthiolation of an aspartic acid residue of ribosomal protein uS12. The sequence is that of Ribosomal protein uS12 methylthiotransferase RimO from Jannaschia sp. (strain CCS1).